We begin with the raw amino-acid sequence, 536 residues long: Membrane protein insertase YidC (536 aa).

5 helical membrane passes run 7 to 27, 332 to 352, 411 to 431, 449 to 469, and 488 to 508; these read LLVM…QQDF, FWLL…IMGV, MGGC…YWTF, LSAQ…MFLL, and FMPV…VLYW.

It belongs to the OXA1/ALB3/YidC family. Type 1 subfamily. In terms of assembly, interacts with the Sec translocase complex via SecD. Specifically interacts with transmembrane segments of nascent integral membrane proteins during membrane integration.

The protein localises to the cell inner membrane. Functionally, required for the insertion and/or proper folding and/or complex formation of integral membrane proteins into the membrane. Involved in integration of membrane proteins that insert both dependently and independently of the Sec translocase complex, as well as at least some lipoproteins. Aids folding of multispanning membrane proteins. This chain is Membrane protein insertase YidC, found in Haemophilus ducreyi (strain 35000HP / ATCC 700724).